Here is a 2438-residue protein sequence, read N- to C-terminus: Highly reducing polyketide synthase ctvA (2438 aa).

One can recognise a Ketosynthase family 3 (KS3) domain in the interval 4 to 364 (MEPIAIVGTA…GTNAHVILES (361 aa)). Residues C105, H244, and H284 each act as for beta-ketoacyl synthase activity in the active site. A malonyl-CoA:ACP transacylase (MAT) domain region spans residues 475 to 777 (VFTGQGAQWA…LKGPALQTLS (303 aa)). Residue S569 is the For malonyltransferase activity of the active site. An N-terminal hotdog fold region spans residues 866–1001 (HPLLGSLSED…GILTVTWGSP (136 aa)). The tract at residues 866 to 1153 (HPLLGSLSED…FFEGVHVSSL (288 aa)) is dehydratase (DH) domain. Positions 866-1159 (HPLLGSLSED…VSSLVPPSAA (294 aa)) constitute a PKS/mFAS DH domain. The Proton acceptor; for dehydratase activity role is filled by H898. The tract at residues 1018-1159 (ADVTDMEEYY…VSSLVPPSAA (142 aa)) is C-terminal hotdog fold. The active-site Proton donor; for dehydratase activity is D1074. The interval 1297 to 1492 (ELLTQFYRDE…TGFGGIDSIT (196 aa)) is methyltransferase (CMet) domain. The tract at residues 2022–2193 (TYLLVGMTGA…ARGLVASVLQ (172 aa)) is ketoreductase (KR) domain. The region spanning 2318–2396 (EVVEAGVAAK…ELAAAATALL (79 aa)) is the Carrier domain. S2356 bears the O-(pantetheine 4'-phosphoryl)serine mark. Positions 2402–2438 (PGVVGDSDVGSEKDGSSDSRGDTSSSSYQVITPEESD) are disordered. Residues 2411–2422 (GSEKDGSSDSRG) are compositionally biased toward basic and acidic residues.

Requires pantetheine 4'-phosphate as cofactor.

It participates in mycotoxin biosynthesis. Highly reducing polyketide synthase (HR-PKS); part of the gene cluster that mediates the biosynthesis of citreoviridin, an inhibitor of the of F1-ATPase beta-subunit. The HR-PKS ctvA accepts acetyl-CoA as the starter unit and catalyzes eight iterations of malonyl-CoA extension and four iterations of SAM-dependent methylation at C4, C12, C14, and C16. The KR and DH domains selectively act on the first six iterations to generate the hexaene chain. In the last three iterations, the KR and DH domains terminate their functions to yield a beta,delta-diketo ester moiety, which then undergoes intramolecular cyclization to yield an alpha-pyrone intermediate. Subsequently, ctvB methylates the alpha-pyrone hydroxyl group to generate citreomontanin. In order to form the tetrahydrofuran ring with the correct stereochemistry, the terminal alkenes of citreomontanin need to undergo isomerization to yield a (17Z)-hexaene, a step that could be catalyzed by ctvC. The (17Z)-hexaene then undergoes bisepoxidation by ctvC to form a (17R,16R,15S,14R)-bisepoxide moiety. Lastly, ctvD acts as a regioselective hydrolase to form the tetrahydrofuran ring with the substituents in the correct absolute configuration, completing the biosynthesis of citreoviridin. This Aspergillus terreus (strain NIH 2624 / FGSC A1156) protein is Highly reducing polyketide synthase ctvA.